Here is a 162-residue protein sequence, read N- to C-terminus: G/U mismatch-specific DNA glycosylase (162 aa).

The protein belongs to the uracil-DNA glycosylase (UDG) superfamily. TDG/mug family. Binds DNA as a monomer.

Its subcellular location is the cytoplasm. It catalyses the reaction Specifically hydrolyzes mismatched double-stranded DNA and polynucleotides, releasing free uracil.. Its function is as follows. Excises ethenocytosine and uracil, which can arise by alkylation or deamination of cytosine, respectively, from the corresponding mispairs with guanine in ds-DNA. It is capable of hydrolyzing the carbon-nitrogen bond between the sugar-phosphate backbone of the DNA and the mispaired base. The complementary strand guanine functions in substrate recognition. Required for DNA damage lesion repair in stationary-phase cells. In Serratia marcescens, this protein is G/U mismatch-specific DNA glycosylase.